Here is a 344-residue protein sequence, read N- to C-terminus: L-rhamnose-proton symporter (344 aa).

10 helical membrane passes run Ala4–Ala24, Trp38–Leu58, Phe68–Ile88, Met101–Ile121, Thr137–Leu157, Leu175–Ala195, Leu214–Ile234, Val259–Gly279, Ile290–Leu310, and Val323–Ala343.

The protein belongs to the L-rhamnose transporter (TC 2.A.7.6) family.

It is found in the cell inner membrane. It carries out the reaction L-rhamnopyranose(in) + H(+)(in) = L-rhamnopyranose(out) + H(+)(out). Functionally, uptake of L-rhamnose across the cytoplasmic membrane with the concomitant transport of protons into the cell (symport system). This is L-rhamnose-proton symporter from Escherichia coli O17:K52:H18 (strain UMN026 / ExPEC).